The following is a 423-amino-acid chain: Gamma-glutamyl phosphate reductase (423 aa).

It belongs to the gamma-glutamyl phosphate reductase family.

It is found in the cytoplasm. The catalysed reaction is L-glutamate 5-semialdehyde + phosphate + NADP(+) = L-glutamyl 5-phosphate + NADPH + H(+). Its pathway is amino-acid biosynthesis; L-proline biosynthesis; L-glutamate 5-semialdehyde from L-glutamate: step 2/2. Catalyzes the NADPH-dependent reduction of L-glutamate 5-phosphate into L-glutamate 5-semialdehyde and phosphate. The product spontaneously undergoes cyclization to form 1-pyrroline-5-carboxylate. This is Gamma-glutamyl phosphate reductase from Paracoccus denitrificans (strain Pd 1222).